The chain runs to 127 residues: Putative iron-sulfur cluster insertion protein ErpA (127 aa).

Positions Met-1–Pro-14 are enriched in polar residues. Positions Met-1–Thr-20 are disordered. 3 residues coordinate iron-sulfur cluster: Cys-55, Cys-119, and Cys-121.

It belongs to the HesB/IscA family. As to quaternary structure, homodimer. Iron-sulfur cluster serves as cofactor.

Required for insertion of 4Fe-4S clusters. The chain is Putative iron-sulfur cluster insertion protein ErpA from Nitrosospira multiformis (strain ATCC 25196 / NCIMB 11849 / C 71).